Here is a 230-residue protein sequence, read N- to C-terminus: E3 ubiquitin-protein ligase RNF114 (230 aa).

An RING-type zinc finger spans residues 31–70 (CPVCLEVYEKPVQVPCGHVFCSACLQECLKPKKPVCGVCR). Cys93 and Cys96 together coordinate Zn(2+). The segment at 93–112 (CHGCRKNFFLSKIRAHVATC) adopts a C2HC RNF-type zinc-finger fold. Lys104 carries the post-translational modification N6-acetyllysine. Positions 108 and 112 each coordinate Zn(2+). At Lys114 the chain carries N6-acetyllysine.

As to quaternary structure, interacts with XAF1, the interaction increases XAF1 stability and proapoptotic effects, and may regulate IFN signaling. Post-translationally, autoubiquitinated. Polyubiquitinated in the presence of E2 enzymes UBE2D1, UBE2D2 and UBE2D3, but only monoubiquitinated in the presence of UBE2E1.

Its subcellular location is the cytoplasm. The protein localises to the nucleus. The enzyme catalyses S-ubiquitinyl-[E2 ubiquitin-conjugating enzyme]-L-cysteine + [acceptor protein]-L-lysine = [E2 ubiquitin-conjugating enzyme]-L-cysteine + N(6)-ubiquitinyl-[acceptor protein]-L-lysine.. Its pathway is protein modification; protein ubiquitination. Its function is as follows. E3 ubiquitin-protein ligase that promotes the ubiquitination of various substrates. In turn, participates in the regulation of many biological processes including cell cycle, apoptosis, osteoclastogenesis as well as innate or adaptive immunity. Acts as negative regulator of NF-kappa-B-dependent transcription by promoting the ubiquitination and stabilization of the NF-kappa-B inhibitor TNFAIP3. May promote the ubiquitination of TRAF6 as well. Also acts as a negative regulator of T-cell activation. Inhibits cellular dsRNA responses and interferon production by targeting MAVS component for proteasomal degradation. Ubiquitinates the CDK inhibitor CDKN1A leading to its degradationand probably also CDKN1B and CDKN1C. This activity stimulates cell cycle G1-to-S phase transition and suppresses cellular senescence. May play a role in spermatogenesis. In Bos taurus (Bovine), this protein is E3 ubiquitin-protein ligase RNF114 (RNF114).